The chain runs to 567 residues: Urease subunit alpha (567 aa).

The Urease domain occupies 129 to 567; sequence GGIDSHIHFI…LPLAQRYFLF (439 aa). Ni(2+) contacts are provided by His-134, His-136, and Lys-217. N6-carboxylysine is present on Lys-217. Residue His-219 participates in substrate binding. Ni(2+) contacts are provided by His-246 and His-272. The Proton donor role is filled by His-320. Ni(2+) is bound at residue Asp-360.

It belongs to the metallo-dependent hydrolases superfamily. Urease alpha subunit family. As to quaternary structure, heterotrimer of UreA (gamma), UreB (beta) and UreC (alpha) subunits. Three heterotrimers associate to form the active enzyme. Ni cation is required as a cofactor. Post-translationally, carboxylation allows a single lysine to coordinate two nickel ions.

Its subcellular location is the cytoplasm. The catalysed reaction is urea + 2 H2O + H(+) = hydrogencarbonate + 2 NH4(+). The protein operates within nitrogen metabolism; urea degradation; CO(2) and NH(3) from urea (urease route): step 1/1. This chain is Urease subunit alpha, found in Pseudomonas entomophila (strain L48).